The following is a 401-amino-acid chain: Splicing factor 45 (401 aa).

Ser2 carries the post-translational modification N-acetylserine. The residue at position 2 (Ser2) is a Phosphoserine. Lys15 is covalently cross-linked (Glycyl lysine isopeptide (Lys-Gly) (interchain with G-Cter in SUMO2)). Residue Lys21 is modified to N6-acetyllysine. Glycyl lysine isopeptide (Lys-Gly) (interchain with G-Cter in SUMO2) cross-links involve residues Lys24 and Lys33. An N6-acetyllysine; alternate modification is found at Lys41. Lys41 participates in a covalent cross-link: Glycyl lysine isopeptide (Lys-Gly) (interchain with G-Cter in SUMO2); alternate. The span at 57-68 shows a compositional bias: basic and acidic residues; it reads LKRGGSSDDRQI. Disordered regions lie at residues 57 to 84 and 114 to 233; these read LKRG…DPVP and RQRE…FLAN. Lys58 participates in a covalent cross-link: Glycyl lysine isopeptide (Lys-Gly) (interchain with G-Cter in SUMO2). The residue at position 71 (Thr71) is a Phosphothreonine. A compositionally biased stretch (basic and acidic residues) spans 114 to 153; it reads RQREERQRQRELERQKEIEEREKRRKDRHEASGFARRPDP. Phosphoserine occurs at positions 155 and 169. Residues 182 to 200 are compositionally biased toward basic and acidic residues; the sequence is VEKDKELPRDFPYEEDSRP. Phosphoserine is present on Ser222. One can recognise a G-patch domain in the interval 235–283; that stretch reads GGTVAHKIMQKYGFREGQGLGKHEQGLSTALSVEKTSKRGGKIIVGDAT. Thr237 carries the post-translational modification Phosphothreonine. Residue Lys256 forms a Glycyl lysine isopeptide (Lys-Gly) (interchain with G-Cter in SUMO2) linkage. Ser266 is subject to Phosphoserine. Residue Lys276 forms a Glycyl lysine isopeptide (Lys-Gly) (interchain with G-Cter in SUMO2) linkage. A phosphoserine mark is found at Ser291 and Ser293. The region spanning 306–385 is the RRM domain; sequence VVLLRNMVGA…YFGGRVVKAC (80 aa).

Binds SXL. Associates with the spliceosome. Interacts with SF3B1, SF1 and U2AF2.

It is found in the nucleus. Functionally, splice factor that binds to the single-stranded 3'AG at the exon/intron border and promotes its utilization in the second catalytic step. Involved in the regulation of alternative splicing and the utilization of cryptic splice sites. Promotes the utilization of a cryptic splice site created by the beta-110 mutation in the HBB gene. The resulting frameshift leads to sickle cell anemia. The sequence is that of Splicing factor 45 (RBM17) from Homo sapiens (Human).